A 72-amino-acid chain; its full sequence is MKKDLHPDYHVINVVMTNGTTFQTKSTWGKEGDTINLDIDPTSHPAWTGGNQHLLDRGGRVSRFKDKFKGFA.

The protein belongs to the bacterial ribosomal protein bL31 family. Type A subfamily. As to quaternary structure, part of the 50S ribosomal subunit.

In terms of biological role, binds the 23S rRNA. This chain is Large ribosomal subunit protein bL31, found in Maricaulis maris (strain MCS10) (Caulobacter maris).